Reading from the N-terminus, the 201-residue chain is 3-isopropylmalate dehydratase small subunit (201 aa).

This sequence belongs to the LeuD family. LeuD type 1 subfamily. Heterodimer of LeuC and LeuD.

The enzyme catalyses (2R,3S)-3-isopropylmalate = (2S)-2-isopropylmalate. It functions in the pathway amino-acid biosynthesis; L-leucine biosynthesis; L-leucine from 3-methyl-2-oxobutanoate: step 2/4. Functionally, catalyzes the isomerization between 2-isopropylmalate and 3-isopropylmalate, via the formation of 2-isopropylmaleate. In Escherichia coli O45:K1 (strain S88 / ExPEC), this protein is 3-isopropylmalate dehydratase small subunit.